Here is a 353-residue protein sequence, read N- to C-terminus: Galectin-9 (353 aa).

One can recognise a Galectin 1 domain in the interval 17-147; it reads FTGPIQGGLQ…CLKLSFITFQ (131 aa). A beta-D-galactoside is bound by residues N47, H60, R64, N74, and 81–87; that span reads WGPEERK. The disordered stretch occupies residues 167–186; that stretch reads QFPRTPKGRKQKTQNFRPAH. One can recognise a Galectin 2 domain in the interval 225–353; that stretch reads FYTPIPNGLY…GDIQLTHVQT (129 aa). Residues H265, R269, T279, and 285–291 each bind a beta-D-galactoside; that span reads WGQEERS.

In terms of assembly, homodimer. In terms of tissue distribution, accentuated expression in liver and thymus of embryo, detected in embryonic heart, brain, lung, liver, and kidney. Highly expressed in adult thymus, small intestine, and liver, and to a lesser extent in lung, kidney, spleen, cardiac, and skeletal muscle. Barely detectable in brain and reticulocyte. Expressed in placenta, uterus and decidua during pregnancy. Expressed in CD4+ T-cells with higher levels in iTreg cells than other T-cell types and sustained high levels throughout iTreg cell differentiation (at protein level). Expressed in myeloid cells in lung. Constitutively expressed in microglia. Isoform 1 is expressed exclusively in the small intestine. Isoform 2 expression in decidua increases in pathological pregnancy from gestation day 7.5 to 13.5 and it is higher than in normal pregnancy. Isoform 3 expression in decidua is higher in normal pregnancy than in pathological pregnancy.

The protein resides in the cytoplasm. It localises to the nucleus. Its subcellular location is the secreted. Functionally, binds galactosides. Has high affinity for the Forssman pentasaccharide. Ligand for HAVCR2/TIM3. Binding to HAVCR2 induces T-helper type 1 lymphocyte (Th1) death. Also stimulates bactericidal activity in infected macrophages by causing macrophage activation and IL1B secretion which restricts intracellular bacterial growth. Ligand for P4HB; the interaction retains P4HB at the cell surface of Th2 T-helper cells, increasing disulfide reductase activity at the plasma membrane, altering the plasma membrane redox state and enhancing cell migration. Ligand for CD44; the interaction enhances binding of SMAD3 to the FOXP3 promoter, leading to up-regulation of FOXP3 expression and increased induced regulatory T (iTreg) cell stability and suppressive function. Promotes ability of mesenchymal stromal cells to suppress T-cell proliferation. Expands regulatory T-cells and induces cytotoxic T-cell apoptosis following virus infection. Activates ERK1/2 phosphorylation inducing cytokine (IL-6, IL-8, IL-12) and chemokine (CCL2) production in mast and dendritic cells. Inhibits degranulation and induces apoptosis of mast cells. Induces maturation and migration of dendritic cells. Inhibits natural killer (NK) cell function. Can transform NK cell phenotype from peripheral to decidual during pregnancy. Astrocyte derived galectin-9 enhances microglial TNF production. May play a role in thymocyte-epithelial interactions relevant to the biology of the thymus. May provide the molecular basis for urate flux across cell membranes, allowing urate that is formed during purine metabolism to efflux from cells and serving as an electrogenic transporter that plays an important role in renal and gastrointestinal urate excretion. Highly selective to the anion urate. In terms of biological role, acts as an eosinophil chemoattractant. It also inhibits angiogenesis. Suppresses IFNG production by natural killer cells. This is Galectin-9 (Lgals9) from Mus musculus (Mouse).